We begin with the raw amino-acid sequence, 335 residues long: Dihydroorotate dehydrogenase (quinone) (335 aa).

FMN-binding positions include 58-62 (AGADK) and Thr82. Lys62 serves as a coordination point for substrate. 107–111 (NRNGF) serves as a coordination point for substrate. Asn135 and Asn168 together coordinate FMN. Asn168 is a substrate binding site. Ser171 functions as the Nucleophile in the catalytic mechanism. Substrate is bound at residue Asn173. Residues Lys213 and Gly241 each coordinate FMN. Residue 242-243 (NT) participates in substrate binding. FMN is bound by residues Gly264, Gly293, and 314 to 315 (YS).

The protein belongs to the dihydroorotate dehydrogenase family. Type 2 subfamily. As to quaternary structure, monomer. Requires FMN as cofactor.

Its subcellular location is the cell membrane. The catalysed reaction is (S)-dihydroorotate + a quinone = orotate + a quinol. It functions in the pathway pyrimidine metabolism; UMP biosynthesis via de novo pathway; orotate from (S)-dihydroorotate (quinone route): step 1/1. Its function is as follows. Catalyzes the conversion of dihydroorotate to orotate with quinone as electron acceptor. In Actinobacillus pleuropneumoniae serotype 3 (strain JL03), this protein is Dihydroorotate dehydrogenase (quinone).